A 90-amino-acid polypeptide reads, in one-letter code: uncharacterized protein (90 aa).

The signal sequence occupies residues 1–20; the sequence is MEKLFVLVFALTLLAFSSEA. The interval 31 to 50 is disordered; sequence QLLRSRRQDRPSKPGFPDEP.

Its subcellular location is the secreted. This is an uncharacterized protein from Rattus norvegicus (Rat).